The following is an 86-amino-acid chain: Exodeoxyribonuclease 7 small subunit (86 aa).

The tract at residues 1–26 is disordered; that stretch reads MQDELFETEKAPQKNTKNAKNAPKKS.

This sequence belongs to the XseB family. As to quaternary structure, heterooligomer composed of large and small subunits.

It localises to the cytoplasm. It catalyses the reaction Exonucleolytic cleavage in either 5'- to 3'- or 3'- to 5'-direction to yield nucleoside 5'-phosphates.. Bidirectionally degrades single-stranded DNA into large acid-insoluble oligonucleotides, which are then degraded further into small acid-soluble oligonucleotides. The polypeptide is Exodeoxyribonuclease 7 small subunit (Helicobacter pylori (strain HPAG1)).